We begin with the raw amino-acid sequence, 1075 residues long: mRNA-binding protein PUF2 (1075 aa).

Residues 38–68 are disordered; the sequence is NTNARSVRVSDKRGRSSSTSPQKIGSYRTRA. Ser-72 carries the phosphoserine modification. Over residues 93-105 the composition is skewed to low complexity; sequence TPVVVVPPTSSTP. The disordered stretch occupies residues 93-112; that stretch reads TPVVVVPPTSSTPDSLNSTT. Position 198 is a phosphoserine (Ser-198). One can recognise an RRM domain in the interval 316 to 402; sequence NTISISNVFP…APSTVSFARV (87 aa). Residues 511-872 form the PUM-HD domain; the sequence is ELNHLLQNAL…QLLEEVGLSS (362 aa). 6 Pumilio repeats span residues 574–611, 612–647, 649–683, 684–719, 722–758, and 760–800; these read AIVM…IMLR, KCNK…NLVT, GVSD…FIFE, SVLS…QLLT, SLII…LILC, and KLVN…KIIH. Ser-872 and Ser-876 each carry phosphoserine. 2 disordered regions span residues 874–931 and 997–1075; these read GISP…LNFN and NNYN…SYGY. Composition is skewed to low complexity over residues 901–916, 997–1009, and 1018–1063; these read VSVS…HNSV, NNYN…SQMN, and NNNN…NNNN.

Its subcellular location is the cytoplasm. Functionally, RNA-binding protein involved in post-transcriptional regulation. Negatively regulates expression of COX17 by binding to the 3'-UTR of COX17 mRNA. Promotes decay of COX17 mRNA by enhancing its rate of deadenylation and subsequent turnover. Predominantly binds to mRNAs encoding membrane-associated proteins with roles in transmembrane transport and vesicular trafficking. This chain is mRNA-binding protein PUF2 (PUF2), found in Saccharomyces cerevisiae (strain ATCC 204508 / S288c) (Baker's yeast).